The chain runs to 323 residues: MPDSFSKIPIPVILGATGSGKTATAIALAELLDAEIVSADSRQIYKELDIGTAKPTAEERRAVKHHFIDELEVTEPYNAAQFATDAATRIEAIFSTGKNVVVAGGSTLYLQGLLQGFSKLPENSPEVREKLYADLAEHGATALYEKLKAADPEHAATLDPTKTQRLIRSLEILEVSSKTVSELKAAEILKPGFHFVPFGLALPRERLYEKINLRTDEMFKNGFLEEATRLFEKYAPVMRQGVKINALATVGYNELFSFLEGKLSLDEAKNLVKQHTRNYAKRQLTFFRNKFSADWINFAETDENALETAKQILMKLKKANPFC.

15–22 (GATGSGKT) lines the ATP pocket. 17–22 (TGSGKT) contributes to the substrate binding site. 2 interaction with substrate tRNA regions span residues 40–43 (DSRQ) and 164–168 (QRLIR).

The protein belongs to the IPP transferase family. As to quaternary structure, monomer. Mg(2+) is required as a cofactor.

It carries out the reaction adenosine(37) in tRNA + dimethylallyl diphosphate = N(6)-dimethylallyladenosine(37) in tRNA + diphosphate. Catalyzes the transfer of a dimethylallyl group onto the adenine at position 37 in tRNAs that read codons beginning with uridine, leading to the formation of N6-(dimethylallyl)adenosine (i(6)A). The protein is tRNA dimethylallyltransferase of Chloroherpeton thalassium (strain ATCC 35110 / GB-78).